The chain runs to 408 residues: Argininosuccinate synthase (408 aa).

Residues 11-19 (AYSGGLDTS) and Ala-38 each bind ATP. Residues Tyr-91 and Ser-96 each contribute to the L-citrulline site. Gly-121 lines the ATP pocket. Residues Thr-123, Asn-127, and Asp-128 each contribute to the L-aspartate site. Residue Asn-127 participates in L-citrulline binding. L-citrulline contacts are provided by Arg-131, Ser-182, Ser-191, Glu-267, and Tyr-279.

It belongs to the argininosuccinate synthase family. Type 1 subfamily. As to quaternary structure, homotetramer.

The protein resides in the cytoplasm. It catalyses the reaction L-citrulline + L-aspartate + ATP = 2-(N(omega)-L-arginino)succinate + AMP + diphosphate + H(+). The protein operates within amino-acid biosynthesis; L-arginine biosynthesis; L-arginine from L-ornithine and carbamoyl phosphate: step 2/3. This is Argininosuccinate synthase from Azorhizobium caulinodans (strain ATCC 43989 / DSM 5975 / JCM 20966 / LMG 6465 / NBRC 14845 / NCIMB 13405 / ORS 571).